A 111-amino-acid polypeptide reads, in one-letter code: Large ribosomal subunit protein uL22 (111 aa).

This sequence belongs to the universal ribosomal protein uL22 family. Part of the 50S ribosomal subunit.

In terms of biological role, this protein binds specifically to 23S rRNA; its binding is stimulated by other ribosomal proteins, e.g. L4, L17, and L20. It is important during the early stages of 50S assembly. It makes multiple contacts with different domains of the 23S rRNA in the assembled 50S subunit and ribosome. The globular domain of the protein is located near the polypeptide exit tunnel on the outside of the subunit, while an extended beta-hairpin is found that lines the wall of the exit tunnel in the center of the 70S ribosome. This Chlamydia felis (strain Fe/C-56) (Chlamydophila felis) protein is Large ribosomal subunit protein uL22.